We begin with the raw amino-acid sequence, 474 residues long: Homocitrate synthase, mitochondrial (474 aa).

A Pyruvate carboxyltransferase domain is found at 67 to 320; that stretch reads FQIIESTLRE…KSKYKLEKLK (254 aa). Arginine 75 contributes to the 2-oxoglutarate binding site. Glutamate 76 is a Mg(2+) binding site. The 2-oxoglutarate site is built by histidine 135, arginine 195, and threonine 229. Residues histidine 256 and histidine 258 each coordinate Mg(2+). The Proton acceptor role is filled by histidine 353.

The protein belongs to the alpha-IPM synthase/homocitrate synthase family. Homocitrate synthase LYS20/LYS21 subfamily. Mg(2+) is required as a cofactor. Requires Mn(2+) as cofactor.

It is found in the mitochondrion. It catalyses the reaction acetyl-CoA + 2-oxoglutarate + H2O = (2R)-homocitrate + CoA + H(+). It participates in amino-acid biosynthesis; L-lysine biosynthesis via AAA pathway; L-alpha-aminoadipate from 2-oxoglutarate: step 1/5. Catalyzes the aldol-type condensation of 2-oxoglutarate with acetyl-CoA to yield homocitrate. Carries out the first step of the alpha-aminoadipate (AAA) lysine biosynthesis pathway. This chain is Homocitrate synthase, mitochondrial (lys1), found in Penicillium rubens (strain ATCC 28089 / DSM 1075 / NRRL 1951 / Wisconsin 54-1255) (Penicillium chrysogenum).